Consider the following 554-residue polypeptide: Potassium/proton antiporter CemA (554 aa).

A helical membrane pass occupies residues 50 to 70 (SLFVVLFIPFFINIFTKIYVF). Residues 113-410 (KTENFFPEKP…VPYNFNKNTE (298 aa)) are insert. The next 3 helical transmembrane spans lie at 429–449 (ISAI…LFLL), 479–499 (MLLF…EVIF), and 514–534 (IIFL…KYWI).

This sequence belongs to the CemA family.

It is found in the plastid. It localises to the chloroplast inner membrane. The enzyme catalyses K(+)(in) + H(+)(out) = K(+)(out) + H(+)(in). Its function is as follows. Contributes to K(+)/H(+) antiport activity by supporting proton efflux to control proton extrusion and homeostasis in chloroplasts in a light-dependent manner to modulate photosynthesis. Prevents excessive induction of non-photochemical quenching (NPQ) under continuous-light conditions. Indirectly promotes efficient inorganic carbon uptake into chloroplasts. This chain is Potassium/proton antiporter CemA, found in Stigeoclonium helveticum (Green alga).